The primary structure comprises 268 residues: tRNA (guanine-N(1)-)-methyltransferase (268 aa).

S-adenosyl-L-methionine is bound by residues glycine 110 and 129-134 (IGDFVM). The tract at residues 246-268 (WGAPPAPVKRHRKRRPETTESAS) is disordered.

The protein belongs to the RNA methyltransferase TrmD family. In terms of assembly, homodimer.

It is found in the cytoplasm. The catalysed reaction is guanosine(37) in tRNA + S-adenosyl-L-methionine = N(1)-methylguanosine(37) in tRNA + S-adenosyl-L-homocysteine + H(+). Specifically methylates guanosine-37 in various tRNAs. The chain is tRNA (guanine-N(1)-)-methyltransferase from Deinococcus deserti (strain DSM 17065 / CIP 109153 / LMG 22923 / VCD115).